The following is a 78-amino-acid chain: Small ribosomal subunit protein bS16 (78 aa).

This sequence belongs to the bacterial ribosomal protein bS16 family.

The protein is Small ribosomal subunit protein bS16 of Thermodesulfovibrio yellowstonii (strain ATCC 51303 / DSM 11347 / YP87).